Consider the following 267-residue polypeptide: Very long chain fatty acid elongase 6 (267 aa).

The N-linked (GlcNAc...) asparagine glycan is linked to Asn-2. The next 7 membrane-spanning stretches (helical) occupy residues 34–51 (FLFS…RHLM), 70–90 (LAVF…YILM), 111–131 (FWAY…IFII), 136–156 (KLIF…WYSY), 159–179 (MVAG…VMYS), 197–217 (FITL…YLVF), and 234–254 (IFWS…FFFE).

It belongs to the ELO family. ELOVL6 subfamily. In terms of processing, N-Glycosylated. As to expression, expressed in liver and barely in brain.

The protein resides in the endoplasmic reticulum membrane. It catalyses the reaction a very-long-chain acyl-CoA + malonyl-CoA + H(+) = a very-long-chain 3-oxoacyl-CoA + CO2 + CoA. It carries out the reaction hexadecanoyl-CoA + malonyl-CoA + H(+) = 3-oxooctadecanoyl-CoA + CO2 + CoA. The enzyme catalyses (9Z)-hexadecenoyl-CoA + malonyl-CoA + H(+) = 3-oxo-(11Z)-octadecenoyl-CoA + CO2 + CoA. The catalysed reaction is dodecanoyl-CoA + malonyl-CoA + H(+) = 3-oxotetradecanoyl-CoA + CO2 + CoA. It catalyses the reaction tetradecanoyl-CoA + malonyl-CoA + H(+) = 3-oxohexadecanoyl-CoA + CO2 + CoA. It carries out the reaction (9Z)-octadecenoyl-CoA + malonyl-CoA + H(+) = 3-oxo-(11Z)-eicosenoyl-CoA + CO2 + CoA. The enzyme catalyses (9Z,12Z)-octadecadienoyl-CoA + malonyl-CoA + H(+) = (11Z,14Z)-3-oxoicosa-11,14-dienoyl-CoA + CO2 + CoA. The catalysed reaction is (9Z,12Z,15Z)-octadecatrienoyl-CoA + malonyl-CoA + H(+) = (11Z,14Z,17Z)-3-oxoeicosatrienoyl-CoA + CO2 + CoA. Its pathway is lipid metabolism; fatty acid biosynthesis. The reaction is stimulated by the presence of HSD17B12, the enzyme catalyzing the second step of the elongation cycle. In terms of biological role, catalyzes the first and rate-limiting reaction of the four reactions that constitute the long-chain fatty acids elongation cycle. This endoplasmic reticulum-bound enzymatic process allows the addition of 2 carbons to the chain of long- and very long-chain fatty acids (VLCFAs) per cycle. Condensing enzyme that elongates fatty acids with 12, 14 and 16 carbons with higher activity toward C16:0 acyl-CoAs. Catalyzes the synthesis of unsaturated C16 long chain fatty acids and, to a lesser extent, C18:0 and those with low desaturation degree. May participate in the production of saturated and monounsaturated VLCFAs of different chain lengths that are involved in multiple biological processes as precursors of membrane lipids and lipid mediators. The polypeptide is Very long chain fatty acid elongase 6 (Rattus norvegicus (Rat)).